Here is a 723-residue protein sequence, read N- to C-terminus: Solute carrier organic anion transporter family member 4A1 (723 aa).

The Cytoplasmic portion of the chain corresponds to methionine 1–lysine 102. Residues serine 23–lysine 64 form a disordered region. Residues proline 33 to alanine 46 show a composition bias toward low complexity. Residues serine 39, serine 42, and serine 45 each carry the phosphoserine modification. Residues glycine 103 to isoleucine 123 traverse the membrane as a helical segment. At asparagine 124–glycine 142 the chain is on the extracellular side. The chain crosses the membrane as a helical span at residues leucine 143–glycine 163. Residues glycine 164–proline 169 are Cytoplasmic-facing. The helical transmembrane segment at arginine 170–glycine 194 threads the bilayer. The Extracellular segment spans residues arginine 195–glycine 224. A glycan (N-linked (GlcNAc...) asparagine) is linked at asparagine 212. Residues leucine 225–aspartate 255 traverse the membrane as a helical segment. Over glutamate 256–alanine 274 the chain is Cytoplasmic. A helical membrane pass occupies residues isoleucine 275–valine 295. Residues glycine 296–valine 309 are Extracellular-facing. The helical transmembrane segment at glycine 310–proline 334 threads the bilayer. The Cytoplasmic segment spans residues arginine 335–leucine 380. Residues leucine 381 to alanine 402 form a helical membrane-spanning segment. The Extracellular segment spans residues glycine 403–glutamate 422. Residues alanine 423–valine 446 traverse the membrane as a helical segment. The Cytoplasmic portion of the chain corresponds to asparagine 447–lysine 450. Residues leucine 451–valine 473 form a helical membrane-spanning segment. Residues phenylalanine 474–leucine 582 lie on the Extracellular side of the membrane. Residues leucine 500 to leucine 557 enclose the Kazal-like domain. Cystine bridges form between cysteine 506–cysteine 536 and cysteine 521–cysteine 555. N-linked (GlcNAc...) asparagine glycosylation occurs at asparagine 566. A helical membrane pass occupies residues leucine 583–leucine 605. Residues arginine 606–serine 614 are Cytoplasmic-facing. Residues phenylalanine 615–isoleucine 640 form a helical membrane-spanning segment. Residues aspartate 641–glycine 673 lie on the Extracellular side of the membrane. Residues leucine 674–tyrosine 691 form a helical membrane-spanning segment. Over lysine 692–valine 723 the chain is Cytoplasmic. Residues glycine 700–valine 723 are disordered. Positions leucine 701–valine 723 are enriched in low complexity.

Belongs to the organo anion transporter (TC 2.A.60) family.

The protein resides in the cell membrane. It carries out the reaction 3,3',5-triiodo-L-thyronine(out) + L-glutamate(in) = 3,3',5-triiodo-L-thyronine(in) + L-glutamate(out). The enzyme catalyses L-thyroxine(out) + L-glutamate(in) = L-thyroxine(in) + L-glutamate(out). The catalysed reaction is estrone 3-sulfate(out) + L-glutamate(in) = estrone 3-sulfate(in) + L-glutamate(out). It catalyses the reaction taurocholate(out) + L-glutamate(in) = taurocholate(in) + L-glutamate(out). It carries out the reaction 3,3',5-triiodo-L-thyronine(out) = 3,3',5-triiodo-L-thyronine(in). The enzyme catalyses L-thyroxine(out) = L-thyroxine(in). The catalysed reaction is 3,3',5'-triiodo-L-thyronine(out) = 3,3',5'-triiodo-L-thyronine(in). It catalyses the reaction estrone 3-sulfate(out) = estrone 3-sulfate(in). It carries out the reaction 17beta-estradiol 17-O-(beta-D-glucuronate)(out) = 17beta-estradiol 17-O-(beta-D-glucuronate)(in). The enzyme catalyses taurocholate(out) = taurocholate(in). The catalysed reaction is prostaglandin E2(out) = prostaglandin E2(in). Its function is as follows. Organic anion antiporter with apparent broad substrate specificity. Recognizes various substrates including thyroid hormones 3,3',5-triiodo-L-thyronine (T3), L-thyroxine (T4) and 3,3',5'-triiodo-L-thyronine (rT3), conjugated steroids such as estrone 3-sulfate and estradiol 17-beta glucuronide, bile acids such as taurocholate and prostanoids such as prostaglandin E2, likely operating in a tissue-specific manner. May be involved in uptake of metabolites from the circulation into organs such as kidney, liver or placenta. Possibly drives the selective transport of thyroid hormones and estrogens coupled to an outward glutamate gradient across the microvillous membrane of the placenta. The transport mechanism, its electrogenicity and potential tissue-specific counterions remain to be elucidated. The sequence is that of Solute carrier organic anion transporter family member 4A1 (Slco4a1) from Mus musculus (Mouse).